The primary structure comprises 503 residues: tRNA-2-methylthio-N(6)-dimethylallyladenosine synthase (503 aa).

Residues 5 to 121 (RSYEIRTFGC…LPVLLERARH (117 aa)) form the MTTase N-terminal domain. [4Fe-4S] cluster contacts are provided by Cys14, Cys50, Cys84, Cys158, Cys162, and Cys165. Residues 144–380 (RESAYAGWVS…IALQEEISLA (237 aa)) form the Radical SAM core domain. The region spanning 383-453 (RELIGTEVEL…PHHLIADAPV (71 aa)) is the TRAM domain.

This sequence belongs to the methylthiotransferase family. MiaB subfamily. As to quaternary structure, monomer. The cofactor is [4Fe-4S] cluster.

The protein resides in the cytoplasm. The catalysed reaction is N(6)-dimethylallyladenosine(37) in tRNA + (sulfur carrier)-SH + AH2 + 2 S-adenosyl-L-methionine = 2-methylsulfanyl-N(6)-dimethylallyladenosine(37) in tRNA + (sulfur carrier)-H + 5'-deoxyadenosine + L-methionine + A + S-adenosyl-L-homocysteine + 2 H(+). Functionally, catalyzes the methylthiolation of N6-(dimethylallyl)adenosine (i(6)A), leading to the formation of 2-methylthio-N6-(dimethylallyl)adenosine (ms(2)i(6)A) at position 37 in tRNAs that read codons beginning with uridine. The protein is tRNA-2-methylthio-N(6)-dimethylallyladenosine synthase of Nocardia farcinica (strain IFM 10152).